Consider the following 51-residue polypeptide: uncharacterized protein (51 aa).

This is an uncharacterized protein from Enterobacteria phage T4 (Bacteriophage T4).